The following is a 373-amino-acid chain: Transcription factor NF-E2 45 kDa subunit (373 aa).

Disordered regions lie at residues 1–22 and 40–60; these read MPPCPPQPNRNRLPQLPTGELG and LNVPSEPSFEPQAPTPYPGPL. The required for interaction with MAPK8 stretch occupies residues 1 to 83; it reads MPPCPPQPNR…AGFTLPPPPY (83 aa). Residues 1-206 form a transactivation domain region; it reads MPPCPPQPNR…PPTETPLVLE (206 aa). 2 consecutive short sequence motifs (PXY motif) follow at residues 61 to 65 and 79 to 83; these read PPPTY and PPPPY. Residues 131-163 form a disordered region; it reads LPVGQPKPQEDPESDSGLSLNYSDAESLELEGT. S157 carries the post-translational modification Phosphoserine; by MAPK8. S170 is subject to Phosphoserine; by PKA. The tract at residues 206–225 is disordered; that stretch reads ESSSGPVRAKPAVRGEAGSR. In terms of domain architecture, bZIP spans 266–329; it reads LVRDIRRRGK…EVMRQQLTEL (64 aa). The interval 268–287 is basic motif; the sequence is RDIRRRGKNKVAAQNCRKRK. Residues 291–298 form a leucine-zipper region; it reads IVQLEREL. K368 participates in a covalent cross-link: Glycyl lysine isopeptide (Lys-Gly) (interchain with G-Cter in SUMO); alternate. K368 participates in a covalent cross-link: Glycyl lysine isopeptide (Lys-Gly) (interchain with G-Cter in SUMO1); alternate.

The protein belongs to the bZIP family. CNC subfamily. As to quaternary structure, homodimer; can bind DNA as a homodimer. Erythroid transcription activator nuclear factor erythroid-derived 2 (NF-E2), composed of a heterodimer of NFE2 and MAFK, possesses transactivation activity on beta-globin. Also forms high affinity heterodimer with MAFG; the interaction promotes erythropoiesis. Interacts (via the PXY motif 1) with ITCH (via the WW 1 domain); the interaction promotes 'Lys63'-linked ubiquitination of NFE2, translocates it to the cytoplasm and inhibits its transactivation activity. Interacts with KMT2D/MLL2; the interaction promotes transactivation of the beta-globin locus. Interacts with MAPK8 (phosphorylated form); the interaction leads to phosphorylation of NFE2 in undifferentiated cells. Post-translationally, phosphorylated on serine residues. In undifferentiated erythrocytes, phosphorylated by MAPK8 which then leads to ubiquitination and protein degradation. Sumoylated. Sumoylation is required for translocation to nuclear bodies PODs, anchoring to the gene loci, and transactivation of the beta-globin gene. In terms of processing, ubiquitinated mainly by 'Lys63'-linked ubiquitin. Polyubiquitination with 'Lys63'-linked ubiquitin by ITCH retains NFE2 in the cytoplasm preventing its transactivation activity. In undifferentiated erythrocyte, ubiquitinated after MAPK8-mediatd phosphorylation leading to protein degradation.

It localises to the nucleus. Its subcellular location is the PML body. It is found in the cytoplasm. Functionally, component of the NF-E2 complex essential for regulating erythroid and megakaryocytic maturation and differentiation. Binds to the hypersensitive site 2 (HS2) of the beta-globin control region (LCR). This subunit (NFE2) recognizes the TCAT/C sequence of the AP-1-like core palindrome present in a number of erythroid and megakaryocytic gene promoters. Requires MAFK or other small MAF proteins for binding to the NF-E2 motif. May play a role in all aspects of hemoglobin production from globin and heme synthesis to procurement of iron. The protein is Transcription factor NF-E2 45 kDa subunit (Nfe2) of Rattus norvegicus (Rat).